A 165-amino-acid polypeptide reads, in one-letter code: MSHPALTQLRALRYFTEIPALEPQLLDWLLLEDSMTKRFEQQGKTVSVTMIREGFVEQNEIPEELPLLPKESRYWLREILLCADGEPWLAGRTVVPVSTLSGPELALQKLGKTPLGRYLFTSSTLTRDFIEIGRDAGLWGRRSRLRLSGKPLLLTELFLPASPLY.

Positions 35, 77, 115, and 156 each coordinate substrate.

Belongs to the UbiC family. In terms of assembly, monomer.

It localises to the cytoplasm. It carries out the reaction chorismate = 4-hydroxybenzoate + pyruvate. The protein operates within cofactor biosynthesis; ubiquinone biosynthesis. Removes the pyruvyl group from chorismate, with concomitant aromatization of the ring, to provide 4-hydroxybenzoate (4HB) for the ubiquinone pathway. This is Chorismate pyruvate-lyase from Escherichia coli O127:H6 (strain E2348/69 / EPEC).